Reading from the N-terminus, the 264-residue chain is Electron transfer flavoprotein subunit beta (264 aa).

AMP contacts are provided by residues alanine 6, 36–39, valine 64, 119–122, and 127–130; these read NEWD, GVQS, and YAST.

In terms of assembly, heterodimer of an alpha and a beta subunit. Forms a ternary complex with trimethylamine dehydrogenase.

In terms of biological role, heterodimeric electron transfer flavoprotein that accepts electrons from trimethylamine dehydrogenase. It transfers the electrons to the main respiratory chain via ETF-ubiquinone oxidoreductase (ETF dehydrogenase). EtfB binds an AMP molecule that probably has a purely structural role. This chain is Electron transfer flavoprotein subunit beta (etfB), found in Methylophilus methylotrophus (Bacterium W3A1).